The chain runs to 572 residues: AAA ATPase forming ring-shaped complexes (572 aa).

Positions 1-22 are disordered; it reads MTEPRHESGSAAPQRPATDPVQ. Residues 21 to 67 are a coiled coil; it reads VQRQVNLLRDQKRNLDKQAAALASQNEKLVRLLNASRQEIVGLKKTL. 270-275 is a binding site for ATP; sequence GNGKTL. A compositionally biased stretch (acidic residues) spans 527-539; the sequence is HEQQDLPDTEDSE. The interval 527–572 is disordered; it reads HEQQDLPDTEDSEDWARLTGRRGDTIDSVHMASHRPQGEPGPGATP.

It belongs to the AAA ATPase family. In terms of assembly, homohexamer. Assembles into a hexameric ring structure.

This is AAA ATPase forming ring-shaped complexes from Kocuria rhizophila (strain ATCC 9341 / DSM 348 / NBRC 103217 / DC2201).